A 305-amino-acid chain; its full sequence is Methionyl-tRNA formyltransferase (305 aa).

Residue 108-111 (SLLP) participates in (6S)-5,6,7,8-tetrahydrofolate binding.

Belongs to the Fmt family.

The enzyme catalyses L-methionyl-tRNA(fMet) + (6R)-10-formyltetrahydrofolate = N-formyl-L-methionyl-tRNA(fMet) + (6S)-5,6,7,8-tetrahydrofolate + H(+). Its function is as follows. Attaches a formyl group to the free amino group of methionyl-tRNA(fMet). The formyl group appears to play a dual role in the initiator identity of N-formylmethionyl-tRNA by promoting its recognition by IF2 and preventing the misappropriation of this tRNA by the elongation apparatus. The polypeptide is Methionyl-tRNA formyltransferase (Thermus thermophilus (strain ATCC 27634 / DSM 579 / HB8)).